A 178-amino-acid chain; its full sequence is Large ribosomal subunit protein uL10 (178 aa).

The protein belongs to the universal ribosomal protein uL10 family. As to quaternary structure, part of the ribosomal stalk of the 50S ribosomal subunit. The N-terminus interacts with L11 and the large rRNA to form the base of the stalk. The C-terminus forms an elongated spine to which L12 dimers bind in a sequential fashion forming a multimeric L10(L12)X complex.

Forms part of the ribosomal stalk, playing a central role in the interaction of the ribosome with GTP-bound translation factors. This is Large ribosomal subunit protein uL10 from Mycobacterium tuberculosis (strain ATCC 25177 / H37Ra).